Consider the following 158-residue polypeptide: ATP synthase subunit b', chloroplastic (158 aa).

Residues 25–45 (ATLPLMALQFIILTTILNFIF) form a helical membrane-spanning segment.

Belongs to the ATPase B chain family. As to quaternary structure, F-type ATPases have 2 components, F(1) - the catalytic core - and F(0) - the membrane proton channel. F(1) has five subunits: alpha(3), beta(3), gamma(1), delta(1), epsilon(1). F(0) has four main subunits: a(1), b(1), b'(1) and c(10-14). The alpha and beta chains form an alternating ring which encloses part of the gamma chain. F(1) is attached to F(0) by a central stalk formed by the gamma and epsilon chains, while a peripheral stalk is formed by the delta, b and b' chains.

Its subcellular location is the plastid. The protein resides in the chloroplast thylakoid membrane. F(1)F(0) ATP synthase produces ATP from ADP in the presence of a proton or sodium gradient. F-type ATPases consist of two structural domains, F(1) containing the extramembraneous catalytic core and F(0) containing the membrane proton channel, linked together by a central stalk and a peripheral stalk. During catalysis, ATP synthesis in the catalytic domain of F(1) is coupled via a rotary mechanism of the central stalk subunits to proton translocation. Functionally, component of the F(0) channel, it forms part of the peripheral stalk, linking F(1) to F(0). The b'-subunit is a diverged and duplicated form of b found in plants and photosynthetic bacteria. The protein is ATP synthase subunit b', chloroplastic of Gracilaria tenuistipitata var. liui (Red alga).